A 261-amino-acid chain; its full sequence is Kallikrein 1-related peptidase b16 (261 aa).

An N-terminal signal peptide occupies residues 1–18; that stretch reads MWFLILFLALSLGGIDAA. The propeptide at 19–24 is activation peptide; that stretch reads PPVQSR. One can recognise a Peptidase S1 domain in the interval 25–258; sequence IVGGFKCEKN…FNSWIKDTMM (234 aa). 5 disulfides stabilise this stretch: Cys31-Cys173, Cys50-Cys66, Cys152-Cys219, Cys184-Cys198, and Cys209-Cys234. His65 acts as the Charge relay system in catalysis. N-linked (GlcNAc...) asparagine glycosylation occurs at Asn102. Asp120 acts as the Charge relay system in catalysis. Ser213 serves as the catalytic Charge relay system.

Belongs to the peptidase S1 family. Kallikrein subfamily.

It carries out the reaction Cleavage of the Leu-|-Leu bond in synthetic tetradecapeptide renin substrate, to produce angiotensin I, but not active on natural angiotensinogen. Also hydrolyzes Bz-Arg-p-nitroanilide.. This chain is Kallikrein 1-related peptidase b16 (Klk1b16), found in Mus musculus (Mouse).